Consider the following 372-residue polypeptide: Neutral protease 2 homolog MGYG_06241 (372 aa).

Positions 1 to 19 (MQFFTAIAAISALVAPALA) are cleaved as a signal peptide. Positions 20-188 (LPTQELPQAP…THFAGTLNRR (169 aa)) are excised as a propeptide. 2 cysteine pairs are disulfide-bonded: C195–C264 and C271–C289. H313 provides a ligand contact to Zn(2+). Residue E314 is part of the active site. Zn(2+) is bound by residues H317 and D328.

Belongs to the peptidase M35 family. The cofactor is Zn(2+).

Its subcellular location is the secreted. The enzyme catalyses Preferential cleavage of bonds with hydrophobic residues in P1'. Also 3-Asn-|-Gln-4 and 8-Gly-|-Ser-9 bonds in insulin B chain.. Its function is as follows. Secreted metalloproteinase that allows assimilation of proteinaceous substrates. Shows high activities on basic nuclear substrates such as histone and protamine. May be involved in virulence. This chain is Neutral protease 2 homolog MGYG_06241, found in Arthroderma gypseum (strain ATCC MYA-4604 / CBS 118893) (Microsporum gypseum).